Consider the following 194-residue polypeptide: MTLLLRLFTLGCLLLLAGCATTQPQRDQVNWQQERTRLEQLSHWQLSGKMAIITAQQKGSARVNWQQDGDDYRLNLTSLIGTHILELSRSKGEITLIDNEGNPHQSQDAEALIYQLTGWNIPVAGLPEWIKGLPGQAEFELNPDRSLASVRDGQWQIVYGDYRDQDGYRLPHLLTMTGQGSRLKLQINQWTITR.

The signal sequence occupies residues 1–18 (MTLLLRLFTLGCLLLLAG). Cys-19 carries N-palmitoyl cysteine lipidation. The S-diacylglycerol cysteine moiety is linked to residue Cys-19.

The protein belongs to the LolB family. In terms of assembly, monomer.

It is found in the cell outer membrane. Its function is as follows. Plays a critical role in the incorporation of lipoproteins in the outer membrane after they are released by the LolA protein. The protein is Outer-membrane lipoprotein LolB of Aeromonas hydrophila subsp. hydrophila (strain ATCC 7966 / DSM 30187 / BCRC 13018 / CCUG 14551 / JCM 1027 / KCTC 2358 / NCIMB 9240 / NCTC 8049).